The sequence spans 227 residues: ATP-dependent dethiobiotin synthetase BioD (227 aa).

13 to 18 (DIGKTY) contacts ATP. A Mg(2+)-binding site is contributed by Thr-17. The active site involves Lys-38. Ser-42 provides a ligand contact to substrate. ATP is bound by residues Asp-55, 116–119 (EGSG), and 179–180 (NN). Mg(2+) is bound by residues Asp-55 and Glu-116.

The protein belongs to the dethiobiotin synthetase family. In terms of assembly, homodimer. Mg(2+) serves as cofactor.

The protein localises to the cytoplasm. The enzyme catalyses (7R,8S)-7,8-diammoniononanoate + CO2 + ATP = (4R,5S)-dethiobiotin + ADP + phosphate + 3 H(+). The protein operates within cofactor biosynthesis; biotin biosynthesis; biotin from 7,8-diaminononanoate: step 1/2. In terms of biological role, catalyzes a mechanistically unusual reaction, the ATP-dependent insertion of CO2 between the N7 and N8 nitrogen atoms of 7,8-diaminopelargonic acid (DAPA, also called 7,8-diammoniononanoate) to form a ureido ring. This Clostridium botulinum (strain Alaska E43 / Type E3) protein is ATP-dependent dethiobiotin synthetase BioD.